The following is a 129-amino-acid chain: Antimicrobial peptide NK-lysin (129 aa).

Positions P1–S6 are cleaved as a signal peptide. Positions G7 to L46 are excised as a propeptide. The region spanning L46–T126 is the Saposin B-type domain. Cystine bridges form between C50–C122, C53–C116, and C81–C91. Residues K125 to I129 constitute a propeptide that is removed on maturation.

As to expression, cytotoxic T and NK cells.

It localises to the secreted. May be an effector molecule of cytotoxic activity. High activity against E.coli and B.megaterium, moderate against A.calcoaceticus and S.pyogenes. No activity against P.aeruginosa, S.aureus and Salmonella. Has some antifungal activity against C.albicans. The protein is Antimicrobial peptide NK-lysin (NKL) of Sus scrofa (Pig).